The following is a 407-amino-acid chain: Argininosuccinate synthase (407 aa).

10-18 serves as a coordination point for ATP; that stretch reads AYSGGLDTS. Positions 88 and 93 each coordinate L-citrulline. ATP is bound at residue glycine 118. The L-aspartate site is built by threonine 120, asparagine 124, and aspartate 125. Residue asparagine 124 coordinates L-citrulline. 5 residues coordinate L-citrulline: arginine 128, serine 177, serine 186, glutamate 263, and tyrosine 275.

Belongs to the argininosuccinate synthase family. Type 1 subfamily. As to quaternary structure, homotetramer.

The protein localises to the cytoplasm. It carries out the reaction L-citrulline + L-aspartate + ATP = 2-(N(omega)-L-arginino)succinate + AMP + diphosphate + H(+). It participates in amino-acid biosynthesis; L-arginine biosynthesis; L-arginine from L-ornithine and carbamoyl phosphate: step 2/3. In Clostridium botulinum (strain Eklund 17B / Type B), this protein is Argininosuccinate synthase.